The following is a 152-amino-acid chain: Ribosomal RNA large subunit methyltransferase H (152 aa).

S-adenosyl-L-methionine-binding positions include L69, G96, and 118 to 123 (FGKLTF).

It belongs to the RNA methyltransferase RlmH family. Homodimer.

It localises to the cytoplasm. The enzyme catalyses pseudouridine(1915) in 23S rRNA + S-adenosyl-L-methionine = N(3)-methylpseudouridine(1915) in 23S rRNA + S-adenosyl-L-homocysteine + H(+). Functionally, specifically methylates the pseudouridine at position 1915 (m3Psi1915) in 23S rRNA. This is Ribosomal RNA large subunit methyltransferase H from Mesomycoplasma hyopneumoniae (strain 7448) (Mycoplasma hyopneumoniae).